Reading from the N-terminus, the 121-residue chain is Large ribosomal subunit protein uL14 (121 aa).

This sequence belongs to the universal ribosomal protein uL14 family. Part of the 50S ribosomal subunit. Forms a cluster with proteins L3 and L19. In the 70S ribosome, L14 and L19 interact and together make contacts with the 16S rRNA in bridges B5 and B8.

Its function is as follows. Binds to 23S rRNA. Forms part of two intersubunit bridges in the 70S ribosome. This is Large ribosomal subunit protein uL14 from Porphyromonas gingivalis (strain ATCC 33277 / DSM 20709 / CIP 103683 / JCM 12257 / NCTC 11834 / 2561).